Here is a 491-residue protein sequence, read N- to C-terminus: Calcium/calmodulin-dependent protein kinase type II delta 1 chain (491 aa).

The Protein kinase domain occupies 13–271 (YQLYEELGKG…AAEALKHPWI (259 aa)). ATP is bound by residues 19 to 27 (LGKGAFSVV) and Lys42. The Proton acceptor role is filled by Asp135. Thr286 is modified (phosphothreonine). The residue at position 314 (Ser314) is a Phosphoserine. Residues 315–354 (SKNPYKKPDGVKEPQTTVIHNPTDGNKESSESTNTTIEDE) are disordered. The segment covering 328–338 (PQTTVIHNPTD) has biased composition (polar residues). Position 350 is a phosphothreonine (Thr350).

Belongs to the protein kinase superfamily. CAMK Ser/Thr protein kinase family. CaMK subfamily. As to quaternary structure, CAMK2 is composed of four different chains: alpha, beta, gamma, and delta. The different isoforms assemble into homo- or heteromultimeric holoenzymes composed of 8 to 12 subunits. In terms of tissue distribution, first detected at the 18-somite stage where expression is restricted to somite boundaries. At 24 hpf, expression is elevated in epidermal tissue and in the hatching gland. After 24 hpf, expression dimishes, but persists at low levels along the dorsal trunk. At 48 hpf, expression is restricted at a low level to the forebrain. At 72 hpf, weak expression reappears along the entire dorsal trunk in discrete cell bodies.

The enzyme catalyses L-seryl-[protein] + ATP = O-phospho-L-seryl-[protein] + ADP + H(+). It catalyses the reaction L-threonyl-[protein] + ATP = O-phospho-L-threonyl-[protein] + ADP + H(+). Autophosphorylation of CAMK2 plays an important role in the regulation of the kinase activity. CaM-kinase II (CAMK2) is a prominent kinase in the central nervous system. The polypeptide is Calcium/calmodulin-dependent protein kinase type II delta 1 chain (Danio rerio (Zebrafish)).